Reading from the N-terminus, the 101-residue chain is NAD(P)H-quinone oxidoreductase subunit 4L, chloroplastic (101 aa).

3 helical membrane passes run 2–22 (MLEH…YGLI), 32–52 (MCLE…SDLF), and 61–81 (IFSI…PAIV).

The protein belongs to the complex I subunit 4L family. NDH is composed of at least 16 different subunits, 5 of which are encoded in the nucleus.

It localises to the plastid. It is found in the chloroplast thylakoid membrane. It carries out the reaction a plastoquinone + NADH + (n+1) H(+)(in) = a plastoquinol + NAD(+) + n H(+)(out). It catalyses the reaction a plastoquinone + NADPH + (n+1) H(+)(in) = a plastoquinol + NADP(+) + n H(+)(out). Its function is as follows. NDH shuttles electrons from NAD(P)H:plastoquinone, via FMN and iron-sulfur (Fe-S) centers, to quinones in the photosynthetic chain and possibly in a chloroplast respiratory chain. The immediate electron acceptor for the enzyme in this species is believed to be plastoquinone. Couples the redox reaction to proton translocation, and thus conserves the redox energy in a proton gradient. This Ceratophyllum demersum (Rigid hornwort) protein is NAD(P)H-quinone oxidoreductase subunit 4L, chloroplastic.